The chain runs to 379 residues: Alcohol dehydrogenase 3 (379 aa).

Zn(2+) is bound by residues cysteine 47, threonine 49, histidine 69, cysteine 99, cysteine 102, cysteine 105, cysteine 113, and cysteine 177. An alcohol is bound by residues threonine 49 and histidine 69. Threonine 49 contacts NAD(+). Residues glycine 202 to glycine 207, aspartate 226, lysine 231, threonine 272, valine 295, valine 295 to valine 297, phenylalanine 322, and arginine 372 each bind NAD(+).

Belongs to the zinc-containing alcohol dehydrogenase family. As to quaternary structure, homodimer. Zn(2+) serves as cofactor.

The protein resides in the cytoplasm. It carries out the reaction a primary alcohol + NAD(+) = an aldehyde + NADH + H(+). It catalyses the reaction a secondary alcohol + NAD(+) = a ketone + NADH + H(+). The protein is Alcohol dehydrogenase 3 (ADH3) of Hordeum vulgare (Barley).